A 547-amino-acid polypeptide reads, in one-letter code: (E)-beta-caryophyllene synthase (547 aa).

The Mg(2+) site is built by D302 and D306. Positions 302, 306, 443, and 446 each coordinate substrate. The DDXXD motif signature appears at 302 to 306 (DDLYD). Residues N446 and E454 each coordinate Mg(2+).

Belongs to the terpene synthase family. As to quaternary structure, monomer. Requires Mg(2+) as cofactor. The cofactor is Mn(2+).

The protein resides in the cytoplasm. It carries out the reaction (2E,6E)-farnesyl diphosphate = (-)-(E)-beta-caryophyllene + diphosphate. It functions in the pathway secondary metabolite biosynthesis; terpenoid biosynthesis. Functionally, component of the volatile terpenes biosynthesis pathways. Sesquiterpene synthase that converts farnesyl diphosphate to (E)-beta-caryophyllene. Involved in indirect defense by producing volatile signals attracting natural enemies of herbivores. In Zea mays (Maize), this protein is (E)-beta-caryophyllene synthase.